The primary structure comprises 224 residues: PKHD-type hydroxylase CYB_2270 (224 aa).

The 99-residue stretch at 78–176 (LIHSILISCY…RYAAVSWVQS (99 aa)) folds into the Fe2OG dioxygenase domain. Residues histidine 96, aspartate 98, and histidine 157 each contribute to the Fe cation site. 2-oxoglutarate is bound at residue arginine 167.

The cofactor is Fe(2+). L-ascorbate is required as a cofactor.

This is PKHD-type hydroxylase CYB_2270 from Synechococcus sp. (strain JA-2-3B'a(2-13)) (Cyanobacteria bacterium Yellowstone B-Prime).